Here is a 382-residue protein sequence, read N- to C-terminus: Kelch domain-containing protein 3 (382 aa).

Kelch repeat units lie at residues 25-77 (RVYS…PYMR), 88-138 (TVFL…VLGK), 139-189 (TMYI…TMLG), 191-249 (HMYV…GYNG), and 251-301 (LYIF…IVGD).

As to quaternary structure, component of a CRL2(KLHDC3) complex, also named ECS(KLHDC3) complex, composed of CUL2, Elongin BC (ELOB and ELOC), RBX1 and substrate-specific adapter KLHDC3. May form oligomers as a KLHDC3-ELOB-ELOC complex; this interaction is likely autoinhibitory for the E3 ligase complex.

The protein resides in the cytoplasm. It functions in the pathway protein modification; protein ubiquitination. Substrate-recognition component of a Cul2-RING (CRL2) E3 ubiquitin-protein ligase complex of the DesCEND (destruction via C-end degrons) pathway, which recognizes a C-degron located at the extreme C terminus of target proteins, leading to their ubiquitination and degradation. The C-degron recognized by the DesCEND pathway is usually a motif of less than ten residues and can be present in full-length proteins, truncated proteins or proteolytically cleaved forms. The CRL2(KLHDC3) complex specifically recognizes proteins with a glycine (Gly) at the C-terminus, leading to their ubiquitination and degradation: recognizes the C-terminal -Arg-(Xaa)n-Arg-Gly, -Arg-(Xaa)n-Lys-Gly, and -Arg-(Xaa)n-Gln-Gly degrons. The CRL2(KLHDC3) complex mediates ubiquitination and degradation of truncated SELENOV and SEPHS2 selenoproteins produced by failed UGA/Sec decoding, which end with a glycine. May be involved in meiotic recombination process. In Bos taurus (Bovine), this protein is Kelch domain-containing protein 3.